Consider the following 290-residue polypeptide: Protoheme IX farnesyltransferase (290 aa).

9 helical membrane passes run 8-28 (LTKPGIIMGNLISVLAGYFLA), 36-56 (LSLLVYTMLGVALVIASGCVV), 81-101 (INIEFAFLFAIIMLLIGTGLL), 108-128 (LSAVMVLLGYVFYVFFYTMWY), 133-153 (VYGTLVGSVSGAIPPLVGYLA), 163-183 (VLLFGLFCLWQMPHSYAIAMF), 209-229 (IMIYVLVFSVVALGLYAFGHT), 230-247 (GYEYLAVVAISCYGWFKV), and 270-290 (LAITAFSTVLGIELLPFSITF).

The protein belongs to the UbiA prenyltransferase family. Protoheme IX farnesyltransferase subfamily.

The protein localises to the cell inner membrane. It carries out the reaction heme b + (2E,6E)-farnesyl diphosphate + H2O = Fe(II)-heme o + diphosphate. Its pathway is porphyrin-containing compound metabolism; heme O biosynthesis; heme O from protoheme: step 1/1. Functionally, converts heme B (protoheme IX) to heme O by substitution of the vinyl group on carbon 2 of heme B porphyrin ring with a hydroxyethyl farnesyl side group. The protein is Protoheme IX farnesyltransferase of Aliivibrio salmonicida (strain LFI1238) (Vibrio salmonicida (strain LFI1238)).